Here is a 349-residue protein sequence, read N- to C-terminus: Large ribosomal subunit protein uL2mz, N-terminal part (349 aa).

It belongs to the universal ribosomal protein uL2 family. As to quaternary structure, component of the mitochondrial ribosome large subunit.

Its subcellular location is the mitochondrion. This is Large ribosomal subunit protein uL2mz, N-terminal part from Arabidopsis thaliana (Mouse-ear cress).